The following is an 87-amino-acid chain: Small ribosomal subunit protein eS21 (87 aa).

This sequence belongs to the eukaryotic ribosomal protein eS21 family. As to quaternary structure, component of the small ribosomal subunit. Mature ribosomes consist of a small (40S) and a large (60S) subunit. The 40S subunit contains about 33 different proteins and 1 molecule of RNA (18S). The 60S subunit contains about 49 different proteins and 3 molecules of RNA (25S, 5.8S and 5S).

It is found in the cytoplasm. In terms of biological role, required for the processing of the 20S rRNA-precursor to mature 18S rRNA in a late step of the maturation of 40S ribosomal subunits. Has a physiological role leading to 18S rRNA stability. The polypeptide is Small ribosomal subunit protein eS21 (RPS21) (Candida albicans (Yeast)).